The primary structure comprises 407 residues: Na(+)-translocating NADH-quinone reductase subunit F (407 aa).

Residues 3–23 (IILGVVMFTLIVLALTVMILF) form a helical membrane-spanning segment. A 2Fe-2S ferredoxin-type domain is found at 32–126 (GDITVEINED…NLKIELPEEI (95 aa)). The [2Fe-2S] cluster site is built by cysteine 69, cysteine 75, cysteine 78, and cysteine 110. Residues 129-269 (VKKWTCEVIS…SGPFGEFFAK (141 aa)) enclose the FAD-binding FR-type domain.

It belongs to the NqrF family. Composed of six subunits; NqrA, NqrB, NqrC, NqrD, NqrE and NqrF. It depends on [2Fe-2S] cluster as a cofactor. FAD serves as cofactor.

It localises to the cell inner membrane. The enzyme catalyses a ubiquinone + n Na(+)(in) + NADH + H(+) = a ubiquinol + n Na(+)(out) + NAD(+). Functionally, NQR complex catalyzes the reduction of ubiquinone-1 to ubiquinol by two successive reactions, coupled with the transport of Na(+) ions from the cytoplasm to the periplasm. The first step is catalyzed by NqrF, which accepts electrons from NADH and reduces ubiquinone-1 to ubisemiquinone by a one-electron transfer pathway. The protein is Na(+)-translocating NADH-quinone reductase subunit F of Yersinia pseudotuberculosis serotype O:1b (strain IP 31758).